The sequence spans 138 residues: Cysteine desulfuration protein SufE (138 aa).

Cysteine 51 functions as the Cysteine persulfide intermediate in the catalytic mechanism.

This sequence belongs to the SufE family. Homodimer. Interacts with SufS.

It localises to the cytoplasm. It participates in cofactor biosynthesis; iron-sulfur cluster biosynthesis. In terms of biological role, participates in cysteine desulfuration mediated by SufS. Cysteine desulfuration mobilizes sulfur from L-cysteine to yield L-alanine and constitutes an essential step in sulfur metabolism for biosynthesis of a variety of sulfur-containing biomolecules. Functions as a sulfur acceptor for SufS, by mediating the direct transfer of the sulfur atom from the S-sulfanylcysteine of SufS, an intermediate product of cysteine desulfuration process. The polypeptide is Cysteine desulfuration protein SufE (Salmonella arizonae (strain ATCC BAA-731 / CDC346-86 / RSK2980)).